The following is a 956-amino-acid chain: Glycine dehydrogenase (decarboxylating) 2 (956 aa).

The residue at position 706 (K706) is an N6-(pyridoxal phosphate)lysine.

Belongs to the GcvP family. As to quaternary structure, the glycine cleavage system is composed of four proteins: P, T, L and H. The cofactor is pyridoxal 5'-phosphate.

The catalysed reaction is N(6)-[(R)-lipoyl]-L-lysyl-[glycine-cleavage complex H protein] + glycine + H(+) = N(6)-[(R)-S(8)-aminomethyldihydrolipoyl]-L-lysyl-[glycine-cleavage complex H protein] + CO2. Functionally, the glycine cleavage system catalyzes the degradation of glycine. The P protein binds the alpha-amino group of glycine through its pyridoxal phosphate cofactor; CO(2) is released and the remaining methylamine moiety is then transferred to the lipoamide cofactor of the H protein. In Colwellia psychrerythraea (strain 34H / ATCC BAA-681) (Vibrio psychroerythus), this protein is Glycine dehydrogenase (decarboxylating) 2.